We begin with the raw amino-acid sequence, 271 residues long: Formamidopyrimidine-DNA glycosylase (271 aa).

Proline 2 acts as the Schiff-base intermediate with DNA in catalysis. The active-site Proton donor is the glutamate 3. Residue lysine 58 is the Proton donor; for beta-elimination activity of the active site. DNA contacts are provided by histidine 91 and arginine 109. The segment at phenylalanine 236–arginine 270 adopts an FPG-type zinc-finger fold. Arginine 260 (proton donor; for delta-elimination activity) is an active-site residue.

It belongs to the FPG family. Monomer. Zn(2+) serves as cofactor.

It catalyses the reaction Hydrolysis of DNA containing ring-opened 7-methylguanine residues, releasing 2,6-diamino-4-hydroxy-5-(N-methyl)formamidopyrimidine.. The enzyme catalyses 2'-deoxyribonucleotide-(2'-deoxyribose 5'-phosphate)-2'-deoxyribonucleotide-DNA = a 3'-end 2'-deoxyribonucleotide-(2,3-dehydro-2,3-deoxyribose 5'-phosphate)-DNA + a 5'-end 5'-phospho-2'-deoxyribonucleoside-DNA + H(+). Functionally, involved in base excision repair of DNA damaged by oxidation or by mutagenic agents. Acts as a DNA glycosylase that recognizes and removes damaged bases. Has a preference for oxidized purines, such as 7,8-dihydro-8-oxoguanine (8-oxoG). Has AP (apurinic/apyrimidinic) lyase activity and introduces nicks in the DNA strand. Cleaves the DNA backbone by beta-delta elimination to generate a single-strand break at the site of the removed base with both 3'- and 5'-phosphates. The protein is Formamidopyrimidine-DNA glycosylase of Aromatoleum aromaticum (strain DSM 19018 / LMG 30748 / EbN1) (Azoarcus sp. (strain EbN1)).